The chain runs to 370 residues: MKREKKDYYEILGVPRNATQEEIRKAYKRLVKEWHPDRHPENRKEAEQRFKEIQEAYEVLSDPQKRAMYDRFGYVGEQPVYQEAETGGSFFEDVFREFENIFNRDIFDVFFGEESGRRERREYARRGEDIRYTIEVNLSDLINGTEIPIEYERYETCPRCGGTGVEPDSGYISCPRCGGTGRIREEKRSFFGYFVSERTCDECGGTGRVPQELCHECGGSGRVLRRVRRTIKIPPNIEDGGHLRIPGGGNAGYYGGPYGDLIITVRVRSDSRFKRSGKDLIYDITIDYLQAILGTTVEIPLPEGGTTMLKIPPGTQPETVFRLKGKGLPGEYGRRGDLLVNVHVEIPKNLSREERKVLEDLAKKRGIPVA.

The J domain occupies 7–73; the sequence is DYYEILGVPR…QKRAMYDRFG (67 aa). A CR-type zinc finger spans residues 144-226; it reads GTEIPIEYER…CGGSGRVLRR (83 aa). Residues cysteine 157, cysteine 160, cysteine 174, cysteine 177, cysteine 200, cysteine 203, cysteine 214, and cysteine 217 each coordinate Zn(2+). CXXCXGXG motif repeat units follow at residues 157-164, 174-181, 200-207, and 214-221; these read CPRCGGTG, CDECGGTG, and CHECGGSG.

This sequence belongs to the DnaJ family. Homodimer. The cofactor is Zn(2+).

The protein resides in the cytoplasm. Functionally, participates actively in the response to hyperosmotic and heat shock by preventing the aggregation of stress-denatured proteins and by disaggregating proteins, also in an autonomous, DnaK-independent fashion. Unfolded proteins bind initially to DnaJ; upon interaction with the DnaJ-bound protein, DnaK hydrolyzes its bound ATP, resulting in the formation of a stable complex. GrpE releases ADP from DnaK; ATP binding to DnaK triggers the release of the substrate protein, thus completing the reaction cycle. Several rounds of ATP-dependent interactions between DnaJ, DnaK and GrpE are required for fully efficient folding. Also involved, together with DnaK and GrpE, in the DNA replication of plasmids through activation of initiation proteins. The sequence is that of Chaperone protein DnaJ from Thermotoga neapolitana (strain ATCC 49049 / DSM 4359 / NBRC 107923 / NS-E).